A 327-amino-acid polypeptide reads, in one-letter code: Zinc finger protein 444 (327 aa).

N-acetylmethionine is present on Met1. Residue Lys8 forms a Glycyl lysine isopeptide (Lys-Gly) (interchain with G-Cter in SUMO2) linkage. Residues Ser18 and Ser104 each carry the phosphoserine modification. Residues 20–104 (WHRFRRFHLG…LEELWGPAAS (85 aa)) enclose the SCAN box domain. A disordered region spans residues 101–171 (PAASPDGSSA…SPPLAPGLPA (71 aa)). The span at 106 to 118 (DGSSATRVPQDVT) shows a compositional bias: polar residues. The segment covering 134 to 148 (PLAGTAPGAEGPAPG) has biased composition (low complexity). 2 consecutive C2H2-type zinc fingers follow at residues 179–201 (TSCP…RQSH) and 207–229 (HACP…RDTH). A Glycyl lysine isopeptide (Lys-Gly) (interchain with G-Cter in SUMO2) cross-link involves residue Lys190. A disordered region spans residues 220–243 (EHLRRHRDTHPGSPGSPGPALRPL). Ser235 is subject to Phosphoserine. 2 C2H2-type zinc fingers span residues 250–272 (HACC…RKTH) and 278–300 (FACW…QRIH). Residues 305–314 (ASAQGAVAPG) show a composition bias toward low complexity. A disordered region spans residues 305–327 (ASAQGAVAPGPDGGGPFPPWPLG).

This sequence belongs to the krueppel C2H2-type zinc-finger protein family.

The protein localises to the nucleus. Functionally, transcriptional regulator. Binds to the 5'-flanking critical region of the SCARF1 promoter. This Homo sapiens (Human) protein is Zinc finger protein 444 (ZNF444).